A 29-amino-acid polypeptide reads, in one-letter code: Chassatide C1 (29 aa).

Residues 1 to 29 (GDACGETCFTGICFTAGCSCNPWPTCTRN) constitute a cross-link (cyclopeptide (Gly-Asn)). 3 disulfide bridges follow: C4-C18, C8-C20, and C13-C26.

This is a cyclic peptide. Expressed in leaf, fruit, pedical and stem but not in root (at protein level).

Its function is as follows. Probably participates in a plant defense mechanism. In Chassalia chartacea (Chassalia curviflora), this protein is Chassatide C1.